The sequence spans 410 residues: Iron-sulfur cluster assembly SufBD family protein MTH_1150 (410 aa).

The protein belongs to the iron-sulfur cluster assembly SufBD family.

In Methanothermobacter thermautotrophicus (strain ATCC 29096 / DSM 1053 / JCM 10044 / NBRC 100330 / Delta H) (Methanobacterium thermoautotrophicum), this protein is Iron-sulfur cluster assembly SufBD family protein MTH_1150.